The primary structure comprises 280 residues: Release factor glutamine methyltransferase (280 aa).

S-adenosyl-L-methionine-binding positions include Gly120–Gly124, Asp143, and Asn186. Asn186–Tyr189 provides a ligand contact to substrate.

The protein belongs to the protein N5-glutamine methyltransferase family. PrmC subfamily.

The enzyme catalyses L-glutaminyl-[peptide chain release factor] + S-adenosyl-L-methionine = N(5)-methyl-L-glutaminyl-[peptide chain release factor] + S-adenosyl-L-homocysteine + H(+). In terms of biological role, methylates the class 1 translation termination release factors RF1/PrfA and RF2/PrfB on the glutamine residue of the universally conserved GGQ motif. The protein is Release factor glutamine methyltransferase of Koribacter versatilis (strain Ellin345).